Reading from the N-terminus, the 228-residue chain is Urease accessory protein UreF (228 aa).

It belongs to the UreF family. In terms of assembly, ureD, UreF and UreG form a complex that acts as a GTP-hydrolysis-dependent molecular chaperone, activating the urease apoprotein by helping to assemble the nickel containing metallocenter of UreC. The UreE protein probably delivers the nickel.

It localises to the cytoplasm. In terms of biological role, required for maturation of urease via the functional incorporation of the urease nickel metallocenter. The protein is Urease accessory protein UreF of Photorhabdus laumondii subsp. laumondii (strain DSM 15139 / CIP 105565 / TT01) (Photorhabdus luminescens subsp. laumondii).